The primary structure comprises 178 residues: Caveolin-1 (178 aa).

Serine 2 is modified (N-acetylserine). At serine 2 the chain carries Phosphoserine. A required for homooligomerization region spans residues 2–94 (SGGKYVDSEG…WKASFTTFTV (93 aa)). Residues 2-104 (SGGKYVDSEG…TKYWFYRLLS (103 aa)) lie on the Cytoplasmic side of the membrane. Lysine 5 carries the post-translational modification N6-acetyllysine; alternate. Residue lysine 5 forms a Glycyl lysine isopeptide (Lys-Gly) (interchain with G-Cter in ubiquitin); alternate linkage. Tyrosine 6 carries the post-translational modification Phosphotyrosine. At serine 9 the chain carries Phosphoserine. Tyrosine 14 carries the phosphotyrosine; by ABL1 modification. A Phosphotyrosine modification is found at tyrosine 25. Glycyl lysine isopeptide (Lys-Gly) (interchain with G-Cter in ubiquitin) cross-links involve residues lysine 26, lysine 30, lysine 39, lysine 47, and lysine 57. The segment at 82-94 (DGIWKASFTTFTV) is interaction with CAVIN3. The helical intramembrane region spans 105–125 (ALFGIPMALIWGIYFAILSFL). The Cytoplasmic segment spans residues 126–178 (HIWAVVPCIKSFLIEIQCISRVYSIYVHTFCDPLFEAIGKIFSNIRINMQKEI). The interval 131–142 (VPCIKSFLIEIQ) is interacts with SPRY1, SPRY2, SPRY3 and SPRY4. Residues cysteine 133, cysteine 143, and cysteine 156 are each lipidated (S-palmitoyl cysteine). Residues 149–160 (SIYVHTFCDPLF) form an interacts with SPRY1, SPRY2, and SPRY4 region. Positions 167 to 178 (FSNIRINMQKEI) are interacts with SPRY1, SPRY2, SPRY3 and SPRY4.

The protein belongs to the caveolin family. Homooligomer. Interacts with GLIPR2. Interacts with NOSTRIN. Interacts with SNAP25 and STX1A. Interacts (via the N-terminus) with DPP4; the interaction is direct. Interacts with CTNNB1, CDH1 and JUP. Interacts with PACSIN2; this interaction induces membrane tubulation. Interacts with SLC7A9. Interacts with BMX and BTK. Interacts with TGFBR1. Interacts with CAVIN3 (via leucine-zipper domain) in a cholesterol-sensitive manner. Interacts with CAVIN1. Interacts with EHD2 in a cholesterol-dependent manner. Forms a ternary complex with UBXN6 and VCP; mediates CAV1 targeting to lysosomes for degradation. Interacts with ABCG1; this interaction regulates ABCG1-mediated cholesterol efflux. Interacts with NEU3; this interaction enhances NEU3 sialidase activity within caveola. Interacts (via C-terminus) with SPRY1, SPRY2 (via C-terminus), SPRY3, and SPRY4. Interacts with IGFBP5; this interaction allows trafficking of IGFBP5 from the plasma membrane to the nucleus. Post-translationally, phosphorylated at Tyr-14 by ABL1 in response to oxidative stress. In terms of processing, ubiquitinated. Undergo monoubiquitination and multi- and/or polyubiquitination. Monoubiquitination of N-terminal lysines promotes integration in a ternary complex with UBXN6 and VCP which promotes oligomeric CAV1 targeting to lysosomes for degradation. Ubiquitinated by ZNRF1; leading to degradation and modulation of the TLR4-mediated immune response.

The protein localises to the golgi apparatus membrane. It localises to the cell membrane. The protein resides in the membrane. Its subcellular location is the caveola. It is found in the membrane raft. May act as a scaffolding protein within caveolar membranes. Forms a stable heterooligomeric complex with CAV2 that targets to lipid rafts and drives caveolae formation. Mediates the recruitment of CAVIN proteins (CAVIN1/2/3/4) to the caveolae. Interacts directly with G-protein alpha subunits and can functionally regulate their activity. Involved in the costimulatory signal essential for T-cell receptor (TCR)-mediated T-cell activation. Its binding to DPP4 induces T-cell proliferation and NF-kappa-B activation in a T-cell receptor/CD3-dependent manner. Recruits CTNNB1 to caveolar membranes and may regulate CTNNB1-mediated signaling through the Wnt pathway. Negatively regulates TGFB1-mediated activation of SMAD2/3 by mediating the internalization of TGFBR1 from membrane rafts leading to its subsequent degradation. Binds 20(S)-hydroxycholesterol (20(S)-OHC). The polypeptide is Caveolin-1 (CAV1) (Muntiacus reevesi (Reeves' muntjac)).